A 348-amino-acid polypeptide reads, in one-letter code: Anthranilate phosphoribosyltransferase (348 aa).

5-phospho-alpha-D-ribose 1-diphosphate-binding positions include Gly-80, 83–84 (GD), Thr-88, 90–93 (NVST), 108–116 (KHGNRSVSS), and Ser-120. Gly-80 contacts anthranilate. Ser-92 is a binding site for Mg(2+). Anthranilate is bound at residue Asn-111. Position 166 (Arg-166) interacts with anthranilate. Mg(2+)-binding residues include Asp-224 and Glu-225.

Belongs to the anthranilate phosphoribosyltransferase family. Homodimer. Mg(2+) is required as a cofactor.

The catalysed reaction is N-(5-phospho-beta-D-ribosyl)anthranilate + diphosphate = 5-phospho-alpha-D-ribose 1-diphosphate + anthranilate. It participates in amino-acid biosynthesis; L-tryptophan biosynthesis; L-tryptophan from chorismate: step 2/5. In terms of biological role, catalyzes the transfer of the phosphoribosyl group of 5-phosphorylribose-1-pyrophosphate (PRPP) to anthranilate to yield N-(5'-phosphoribosyl)-anthranilate (PRA). In Sorangium cellulosum (strain So ce56) (Polyangium cellulosum (strain So ce56)), this protein is Anthranilate phosphoribosyltransferase.